The chain runs to 472 residues: Tyrosine--tRNA ligase, mitochondrial (472 aa).

Tyr72 contributes to the L-tyrosine binding site. Asp76 serves as a coordination point for ATP. The 'HIGH' region signature appears at 77-86 (PTGDSLHVGH). The L-tyrosine site is built by Asp116, Tyr216, Gln220, Asp223, and Gln242. The ATP site is built by Ile269 and Lys279. Positions 276-280 (KLGKS) match the 'KMSKS' region motif. 2 positions are modified to N6-acetyllysine: Lys350 and Lys362.

This sequence belongs to the class-I aminoacyl-tRNA synthetase family. In terms of assembly, homodimer.

It localises to the mitochondrion matrix. The catalysed reaction is tRNA(Tyr) + L-tyrosine + ATP = L-tyrosyl-tRNA(Tyr) + AMP + diphosphate + H(+). Its function is as follows. Catalyzes the attachment of tyrosine to tRNA(Tyr) in a two-step reaction: tyrosine is first activated by ATP to form Tyr-AMP and then transferred to the acceptor end of tRNA(Tyr). This Mus musculus (Mouse) protein is Tyrosine--tRNA ligase, mitochondrial (Yars2).